The sequence spans 322 residues: 1-aminocyclopropane-1-carboxylate oxidase 1 (322 aa).

Residues 159 to 259 form the Fe2OG dioxygenase domain; the sequence is PTFGTKVSSY…RMSIASFYNP (101 aa). Fe cation is bound by residues His183, Asp185, and His240.

It belongs to the iron/ascorbate-dependent oxidoreductase family. Requires Fe cation as cofactor.

It catalyses the reaction 1-aminocyclopropane-1-carboxylate + L-ascorbate + O2 = ethene + L-dehydroascorbate + hydrogen cyanide + CO2 + 2 H2O. It participates in alkene biosynthesis; ethylene biosynthesis via S-adenosyl-L-methionine; ethylene from S-adenosyl-L-methionine: step 2/2. The chain is 1-aminocyclopropane-1-carboxylate oxidase 1 (ACO1) from Oryza sativa subsp. japonica (Rice).